Consider the following 504-residue polypeptide: MKLLEQIEKWAIETPDQTAFVWRDAKITYKQLKEDSDALAHWISSEYPDDRSPIMVYGHMQPEMIINFLGCVKAGHAYIPVDLSIPADRVQRIAENSGAKLLLSGTEVTVTDLPVRIVSEDNLKDIFFTHKGNTPNPEHAVKGDENFYIIYTSGSTGNPKGVQITYNCLVSFTKWAVEDFNLQTGQVFLNQAPFSFDLSVMDIYPSLVTGGTLWAIDKDMIARPKDLFASLEQSDIQVWTSTPSFAEMCLMEASFSESMLPNMKTFLFCGEVLPNEVARKLIERFPKATIMNTYGPTEATVAVTGIHVTEEVLDQYKSLPVGYCKSDCRLLIMKEDGTIAPDGEKGEIVIVGPSVSVGYLGSPELTEKAFTMIDGERAYKTGDAGYVENGLLFYNGRLDFQIKLHGYRMELEEIEHHLRACSYVEGAVIVPIKKGEKYDYLLAVVVPGEHSFEKEFKLTSAIKKELNERLPNYMIPRKFMYQSSIPMTPNGKVDRKKLLSEVTA.

152–153 is a binding site for ATP; that stretch reads TS. Asp-197 contributes to the D-alanine binding site. 292 to 297 contacts ATP; the sequence is NTYGPT. Residue Val-301 coordinates D-alanine. Residues Asp-383, 394–397, and Lys-492 each bind ATP; that span reads YNGR. Position 492 (Lys-492) interacts with D-alanine.

It belongs to the ATP-dependent AMP-binding enzyme family. DltA subfamily.

It localises to the cytoplasm. It catalyses the reaction holo-[D-alanyl-carrier protein] + D-alanine + ATP = D-alanyl-[D-alanyl-carrier protein] + AMP + diphosphate. The protein operates within cell wall biogenesis; lipoteichoic acid biosynthesis. Its function is as follows. Catalyzes the first step in the D-alanylation of lipoteichoic acid (LTA), the activation of D-alanine and its transfer onto the D-alanyl carrier protein (Dcp) DltC. In an ATP-dependent two-step reaction, forms a high energy D-alanyl-AMP intermediate, followed by transfer of the D-alanyl residue as a thiol ester to the phosphopantheinyl prosthetic group of the Dcp. D-alanylation of LTA plays an important role in modulating the properties of the cell wall in Gram-positive bacteria, influencing the net charge of the cell wall. This Bacillus cereus (strain ATCC 10987 / NRS 248) protein is D-alanine--D-alanyl carrier protein ligase.